The following is a 2322-amino-acid chain: Protein sidekick homolog (2322 aa).

Positions 1–26 (MNYRIFLLFCTTTVLWSVVSTQLVLG) are cleaved as a signal peptide. Residues 27–2020 (KPPIFQNTGP…IPDDPFYTTW (1994 aa)) are Extracellular-facing. 3 consecutive Ig-like C2-type domains span residues 28–105 (PPIF…AAIS), 217–319 (PSLQ…AYLT), and 324–397 (PVLK…ADMS). Intrachain disulfides connect Cys-52/Cys-94, Cys-247/Cys-301, and Cys-345/Cys-386. Asn-408 carries N-linked (GlcNAc...) asparagine glycosylation. 2 Ig-like C2-type domains span residues 450 to 545 (PFTS…VQVN) and 548 to 639 (SLIE…AMLQ). 2 disulfide bridges follow: Cys-481–Cys-529 and Cys-569–Cys-623. 2 N-linked (GlcNAc...) asparagine glycosylation sites follow: Asn-633 and Asn-656. 13 Fibronectin type-III domains span residues 646–752 (MPER…MPQQ), 757–854 (APRN…TAEG), 859–958 (APKN…TEED), 962–1056 (AVDE…VPPE), 1060–1155 (RPSM…TLQT), 1160–1255 (PSQR…TYES), 1260–1360 (SPRN…TLED), 1364–1458 (PPES…SSVR), 1464–1567 (APAP…TLPS), 1572–1672 (QPIS…VGYS), 1674–1774 (PKRN…LEDK), 1777–1873 (PVGV…SKDG), and 1908–2010 (QAKR…VPES). The interval 732-762 (SNKHGPGKPSLPSSSVTMPQQPPSAAPRNVA) is disordered. N-linked (GlcNAc...) asparagine glycosylation is found at Asn-808, Asn-869, Asn-933, and Asn-1017. Basic and acidic residues predominate over residues 1040-1049 (GDGPVEETKF). Residues 1040 to 1060 (GDGPVEETKFESGVPPELPGR) are disordered. Asn-1108 carries an N-linked (GlcNAc...) asparagine glycan. Positions 1139 to 1163 (GRGAPSEPSRTFETLQTNPETPSQR) are disordered. A compositionally biased stretch (polar residues) spans 1146–1163 (PSRTFETLQTNPETPSQR). Asn-1615, Asn-1677, and Asn-1864 each carry an N-linked (GlcNAc...) asparagine glycan. Positions 1916–1965 (EETENGYVSQRPRRNEIRGAKSAAQTSASSNSNRPTHPIGEWITLRPTDG) are disordered. The span at 1935–1947 (AKSAAQTSASSNS) shows a compositional bias: low complexity. A helical transmembrane segment spans residues 2021–2041 (WFMALVAMAAFVLIVIIIAIL). Over 2042–2322 (CVTGSSAKYR…NLTAGFSSFV (281 aa)) the chain is Cytoplasmic. Disordered regions lie at residues 2081–2114 (NMTR…SVLG), 2167–2254 (YVVS…ADDI), and 2276–2322 (MVRA…SSFV). The span at 2092–2101 (PGTTQSWLSD) shows a compositional bias: polar residues. Residues 2207 to 2223 (PSSSGGSQPQGSPQQQQ) are compositionally biased toward low complexity. Residues 2227–2238 (DSFDEEDDVDDD) show a composition bias toward acidic residues. 2 stretches are compositionally biased toward polar residues: residues 2282 to 2302 (LTNQ…STSE) and 2310 to 2322 (ATPN…SSFV).

This sequence belongs to the sidekick family.

It localises to the membrane. Functionally, cell adhesion protein. The polypeptide is Protein sidekick homolog (rig-4) (Caenorhabditis briggsae).